The primary structure comprises 217 residues: NAD(P)H-quinone oxidoreductase subunit M, chloroplastic (217 aa).

A chloroplast-targeting transit peptide spans 1 to 21 (MVAAFSYTACTKLSLLHPSMV). The interval 48-67 (ETETLKEEQSTEKMKKQPTP) is disordered. The span at 50–62 (ETLKEEQSTEKMK) shows a compositional bias: basic and acidic residues.

Belongs to the NDH complex subunit M family. In terms of assembly, part of the chloroplast NDH complex, composed of a mixture of chloroplast and nucleus encoded subunits. Component of the NDH subcomplex A, at least composed of ndhH, ndhI, ndhJ, ndhK, ndhL, ndhM, ndhN and ndhO.

It is found in the plastid. It localises to the chloroplast thylakoid membrane. The catalysed reaction is a plastoquinone + NADH + (n+1) H(+)(in) = a plastoquinol + NAD(+) + n H(+)(out). It carries out the reaction a plastoquinone + NADPH + (n+1) H(+)(in) = a plastoquinol + NADP(+) + n H(+)(out). Its function is as follows. NDH shuttles electrons from NAD(P)H:plastoquinone, via FMN and iron-sulfur (Fe-S) centers, to quinones in the photosynthetic chain and possibly in a chloroplast respiratory chain. The immediate electron acceptor for the enzyme in this species is believed to be plastoquinone. Couples the redox reaction to proton translocation, and thus conserves the redox energy in a proton gradient. This chain is NAD(P)H-quinone oxidoreductase subunit M, chloroplastic, found in Arabidopsis thaliana (Mouse-ear cress).